The following is a 1238-amino-acid chain: MSSKRRNKNNKNNNKNNNKNNDNNNNIEQQDDIEDISSGDIDTTNLIIDEIEDVYDDYDNEQIKNSLNHSFSNKNNTSLNNSINLSMSLIEVEETELDISSTIRPWELNIFGSLGSSGGGISSTPISQLSPFKTPSPPSSSSSSSQSPLRKPRPSFLDSFRSQFNITNINNKNNNNNNNTTSNFNTSNILNTSNFRNTNIGINNSANNNRNISRNSLPVTFSQITPIKPKNNKQIDSQSQIKPQSQSQSQSQTQSQIQEVQFSQSESQSQTQTQSQNEEKIGFRLPSPLSPIKNIESEQKKASTTSMSYESIEKSQELQNQTQINKSKQDLTNISQKINITTSQHDKDDLGEYRMSEKGGGDDGDDDDDYDNQDEKDNNYNKTNKKQQQQHHHKGKEESQSEYYEKEKEKEKEDIATTRATTTTKSTDNSNNNINKNKEFNENDLQPWLLDALLTQTAPDYPIIQIIKHYDRKEDINMDGIRRKEYQDGSSFLVSDGVNFMIAILPTSVARDLIVSEGTRKIYHEMVGFIIEVQRYVLFPNSKYSGFELFIGNAKFIDKTNEPINFHNLKGVISSSTKLKEVIKRMSHENYWTASSPTEYSNKFFPQNVSNSHHYQITQHETIISQDQLDSLNNLSDWEKHEQPNKLYQFNIYKTNFRHKNKLKQQQQQQEQQEKENQQQQQQKQQQQQQEEQLKEQQEEQQQNQQEEEKQQPSQRQSQQNQQSQQNQQSQQNQQSQQTQQVSQKHQHSQGSQQNQQSQLLQKHQQSQGSQQRQQSQEKQQSQEKQQSQEKQQSQEKHQSQEKHQSQQSQEKQQSQKKQQSQQSQASQQKYQQSQGSQEKQQSQEKQQQQQQQISSQQKGLPKINDDEEYDDTILESFENYSQSQSDLSQQFLSQSQSQSQSQSQRQSKKRKEREENQDSENLDDTVDMNYNQIPSTLDHSTLQGHKFSMYDNTSYYSNQEQEEREIERRRRELAGEDSDEEFEILDEDQVGIGLTHDNDNDNDDEENSYTPTGAATISFLDQNIISGNSGVDESKIPKVFNKNNFDTIKEEEDDEEEKEQQNNNNNINSNSKNNNVNNKLNSQEYDDTFKDTAWIPKKSGKDKFDQSSSSTNFYSSNKKNVPQPTKSVNKPRSTALKKGASQNRQKQSEQQQQQPQQQPQLPQQQQQQQQQQQLRQQQNENTISSLNASRPITKSAPLKYIKRDLTFEEIVKRNKLIRKSREEKMEMWKQHNNIIDD.

Disordered stretches follow at residues 1–38, 122–156, 229–439, 660–1016, 1051–1083, and 1098–1191; these read MSSKRRNKNNKNNNKNNNKNNDNNNNIEQQDDIEDISS, SSTPISQLSPFKTPSPPSSSSSSSQSPLRKPRPSF, PKNN…KNKE, KNKL…TGAA, EEEDDEEEKEQQNNNNNINSNSKNNNVNNKLNS, and KKSG…NASR. 3 stretches are compositionally biased toward low complexity: residues 10-26, 129-149, and 234-276; these read NKNNNKNNNKNNDNNNN, LSPFKTPSPPSSSSSSSQSPL, and QIDS…TQSQ. Positions 317–343 are enriched in polar residues; the sequence is ELQNQTQINKSKQDLTNISQKINITTS. The span at 344–361 shows a compositional bias: basic and acidic residues; the sequence is QHDKDDLGEYRMSEKGGG. Residues 362–372 are compositionally biased toward acidic residues; sequence DDGDDDDDYDN. The segment covering 383–394 has biased composition (basic residues); that stretch reads TNKKQQQQHHHK. Residues 395–416 show a composition bias toward basic and acidic residues; the sequence is GKEESQSEYYEKEKEKEKEDIA. Composition is skewed to low complexity over residues 417–435, 678–691, and 712–792; these read TTRATTTTKSTDNSNNNIN, QQQQQQKQQQQQQE, and QPSQ…QEKQ. The segment covering 793–805 has biased composition (basic and acidic residues); the sequence is QSQEKHQSQEKHQ. Low complexity-rich tracts occupy residues 806–859 and 882–906; these read SQQS…SQQK and SQSQSDLSQQFLSQSQSQSQSQSQR. The segment covering 916-927 has biased composition (acidic residues); the sequence is ENQDSENLDDTV. The span at 929 to 944 shows a compositional bias: polar residues; the sequence is MNYNQIPSTLDHSTLQ. Over residues 966 to 975 the composition is skewed to basic and acidic residues; it reads EIERRRRELA. The span at 976-990 shows a compositional bias: acidic residues; the sequence is GEDSDEEFEILDEDQ. Composition is skewed to low complexity over residues 1062–1083 and 1108–1121; these read QNNNNNINSNSKNNNVNNKLNS and SSSSTNFYSSNKKN. A compositionally biased stretch (polar residues) spans 1123–1133; it reads PQPTKSVNKPR. Low complexity predominate over residues 1142–1181; the sequence is SQNRQKQSEQQQQQPQQQPQLPQQQQQQQQQQQLRQQQNE. A compositionally biased stretch (polar residues) spans 1182-1191; it reads NTISSLNASR.

This is an uncharacterized protein from Dictyostelium discoideum (Social amoeba).